A 335-amino-acid chain; its full sequence is tRNA N6-adenosine threonylcarbamoyltransferase (335 aa).

Fe cation-binding residues include H111 and H115. Substrate contacts are provided by residues 133–137 (LISGG), D166, G179, and N276. Position 301 (D301) interacts with Fe cation.

Belongs to the KAE1 / TsaD family. The cofactor is Fe(2+).

The protein localises to the cytoplasm. The catalysed reaction is L-threonylcarbamoyladenylate + adenosine(37) in tRNA = N(6)-L-threonylcarbamoyladenosine(37) in tRNA + AMP + H(+). Its function is as follows. Required for the formation of a threonylcarbamoyl group on adenosine at position 37 (t(6)A37) in tRNAs that read codons beginning with adenine. Is involved in the transfer of the threonylcarbamoyl moiety of threonylcarbamoyl-AMP (TC-AMP) to the N6 group of A37, together with TsaE and TsaB. TsaD likely plays a direct catalytic role in this reaction. This Wolbachia pipientis wMel protein is tRNA N6-adenosine threonylcarbamoyltransferase.